The following is a 135-amino-acid chain: Large ribosomal subunit protein uL16c (135 aa).

It belongs to the universal ribosomal protein uL16 family. As to quaternary structure, part of the 50S ribosomal subunit.

The protein localises to the plastid. It is found in the chloroplast. The protein is Large ribosomal subunit protein uL16c of Euglena gracilis.